The primary structure comprises 323 residues: Galectin-4 (323 aa).

2 Galectin domains span residues 19 to 150 (YYQP…INFI) and 194 to 323 (YFGR…YVQI). A beta-D-galactoside is bound at residue 256 to 262 (WGSEEKK). S258 carries the phosphoserine modification.

Monomer.

Functionally, galectin that binds lactose and a related range of sugars. May be involved in the assembly of adherens junctions. This is Galectin-4 (LGALS4) from Homo sapiens (Human).